Reading from the N-terminus, the 624-residue chain is Kelch-like ECH-associated protein 1 (624 aa).

S-(2-succinyl)cysteine is present on Cys38. The BTB domain occupies 77–149 (CDVTLQVKYQ…AYTASISMGE (73 aa)). Residue Arg135 forms an N5-[4-(S-L-cysteinyl)-5-methyl-1H-imidazol-2-yl]-L-ornithine (Arg-Cys) (interchain with C-151 in KEAP1) linkage. Position 151 is an S-(2,3-dicarboxypropyl)cysteine; alternate (Cys151). Residue Cys151 is modified to S-(2-succinyl)cysteine; alternate. Residue Cys151 is modified to S-nitrosocysteine; alternate. Cys151 is covalently cross-linked (N5-[4-(S-L-cysteinyl)-5-methyl-1H-imidazol-2-yl]-L-ornithine (Cys-Arg) (interchain with R-135 in KEAP1)). The 103-residue stretch at 184–286 (AIGIANFAEQ…TPNFLQMQLQ (103 aa)) folds into the BACK domain. The residue at position 241 (Cys241) is an S-(2-succinyl)cysteine. Cys257 and Cys273 each carry S-(2,3-dicarboxypropyl)cysteine. An S-(2,3-dicarboxypropyl)cysteine; alternate modification is found at Cys288. Cys288 carries the post-translational modification S-(2-succinyl)cysteine; alternate. Cys319 is modified (S-(2-succinyl)cysteine). 6 Kelch repeats span residues 327 to 372 (LIYT…VVGG), 373 to 423 (LLYA…VIDG), 424 to 470 (HIYA…VLNR), 471 to 517 (LLYA…VLHN), 518 to 564 (CIYA…VHQG), and 565 to 611 (RIYV…VTME). Cys434 is modified (S-cGMP-cysteine). The residue at position 613 (Cys613) is an S-(2-succinyl)cysteine.

Belongs to the KEAP1 family. In terms of assembly, component of the BCR(KEAP1) E3 ubiquitin ligase complex, at least composed of 2 molecules of CUL3, 2 molecules of KEAP1, and RBX1. Interacts with NFE2L2/NRF2; the interaction is direct. Forms a ternary complex with NFE2L2/NRF2 and PGAM5. Interacts with (phosphorylated) SQSTM1/p62; the interaction is direct and inactivates the BCR(KEAP1) complex by sequestering it in inclusion bodies, promoting its degradation. Interacts with NFE2L1. Interacts with BPTF and PTMA. Interacts with MAP1LC3B. Interacts indirectly with ENC1. Interacts with SESN1 and SESN2. Interacts with HSP90AA1 and HSP90AB1. Interacts with PGCKA1; this interaction prevents the ubiquitination of KEAP1 by TRIM25, thus protecting KEAP1 from degradation. (Microbial infection) Interacts with ebolavirus protein VP24; this interaction activates transcription factor NFE2L2/NRF2 by blocking its interaction with KEAP1. In terms of processing, non-enzymatic covalent modifications of reactive cysteines by electrophile metabolites inactivate the BCR(KEAP1) complex. Accumulation of fumarate promotes the formation of cysteine S-succination (S-(2-succinyl)cysteine), leading to inactivate the BCR(KEAP1) complex and promote NFE2L2/NRF2 nuclear accumulation and activation. Nitric oxide-dependent 8-Nitro-cGMP formation promotes cysteine guanylation (S-cGMP-cysteine), leading to NFE2L2/NRF2 nuclear accumulation and activation. Itaconate, an anti-inflammatory metabolite generated in response to lipopolysaccharide, alkylates cysteines, activating NFE2L2/NRF2. Methylglyoxal, a reactive metabolite that accumulates when the glycolytic enzyme PGK1 is inhibited, promotes formation of a methylimidazole cross-link between proximal Cys-151 and Arg-135 on another KEAP1 molecule, resulting in an inactive dimer that inactivates the BCR(KEAP1) complex. Degraded via a proteasomal-independent process during selective autophagy: interaction with phosphorylated SQSTM1/p62 sequesters KEAP1 in inclusion bodies, leading to its degradation. Post-translationally, auto-ubiquitinated by the BCR(KEAP1) complex. Quinone-induced oxidative stress, but not sulforaphane, increases its ubiquitination. Ubiquitination and subsequent degradation is most pronounced following prolonged exposure of cells to oxidative stress, particularly in glutathione-deficient cells that are highly susceptible to oxidative stress. Deubiquitinated by USP25; leading to stabilization. Ubiquitinated by TRIM25; leading to degradation upon ER stress. Broadly expressed, with highest levels in skeletal muscle.

Its subcellular location is the cytoplasm. It localises to the nucleus. It functions in the pathway protein modification; protein ubiquitination. Ubiquitin ligase activity of the BCR(KEAP1) complex is inhibited by oxidative stress and electrophile metabolites such as sulforaphane. Electrophile metabolites react with reactive cysteine residues in KEAP1 and trigger non-enzymatic covalent modifications of these cysteine residues, leading to inactivate the ubiquitin ligase activity of the BCR(KEAP1) complex. Selective autophagy also inactivates the BCR(KEAP1) complex via interaction between KEAP1 and SQSTM1/p62, which sequesters the complex in inclusion bodies and promotes its degradation. In terms of biological role, substrate-specific adapter of a BCR (BTB-CUL3-RBX1) E3 ubiquitin ligase complex that regulates the response to oxidative stress by targeting NFE2L2/NRF2 for ubiquitination. KEAP1 acts as a key sensor of oxidative and electrophilic stress: in normal conditions, the BCR(KEAP1) complex mediates ubiquitination and degradation of NFE2L2/NRF2, a transcription factor regulating expression of many cytoprotective genes. In response to oxidative stress, different electrophile metabolites trigger non-enzymatic covalent modifications of highly reactive cysteine residues in KEAP1, leading to inactivate the ubiquitin ligase activity of the BCR(KEAP1) complex, promoting NFE2L2/NRF2 nuclear accumulation and expression of phase II detoxifying enzymes. In response to selective autophagy, KEAP1 is sequestered in inclusion bodies following its interaction with SQSTM1/p62, leading to inactivation of the BCR(KEAP1) complex and activation of NFE2L2/NRF2. The BCR(KEAP1) complex also mediates ubiquitination of SQSTM1/p62, increasing SQSTM1/p62 sequestering activity and degradation. The BCR(KEAP1) complex also targets BPTF and PGAM5 for ubiquitination and degradation by the proteasome. This chain is Kelch-like ECH-associated protein 1, found in Homo sapiens (Human).